The primary structure comprises 181 residues: Acireductone dioxygenase (181 aa).

Fe(2+) contacts are provided by histidine 97, histidine 99, glutamate 103, and histidine 141. Ni(2+) contacts are provided by histidine 97, histidine 99, glutamate 103, and histidine 141.

Belongs to the acireductone dioxygenase (ARD) family. As to quaternary structure, monomer. Requires Fe(2+) as cofactor. The cofactor is Ni(2+).

The catalysed reaction is 1,2-dihydroxy-5-(methylsulfanyl)pent-1-en-3-one + O2 = 3-(methylsulfanyl)propanoate + CO + formate + 2 H(+). The enzyme catalyses 1,2-dihydroxy-5-(methylsulfanyl)pent-1-en-3-one + O2 = 4-methylsulfanyl-2-oxobutanoate + formate + 2 H(+). The protein operates within amino-acid biosynthesis; L-methionine biosynthesis via salvage pathway; L-methionine from S-methyl-5-thio-alpha-D-ribose 1-phosphate: step 5/6. Its function is as follows. Catalyzes 2 different reactions between oxygen and the acireductone 1,2-dihydroxy-3-keto-5-methylthiopentene (DHK-MTPene) depending upon the metal bound in the active site. Fe-containing acireductone dioxygenase (Fe-ARD) produces formate and 2-keto-4-methylthiobutyrate (KMTB), the alpha-ketoacid precursor of methionine in the methionine recycle pathway. Ni-containing acireductone dioxygenase (Ni-ARD) produces methylthiopropionate, carbon monoxide and formate, and does not lie on the methionine recycle pathway. This is Acireductone dioxygenase from Pseudomonas fluorescens (strain Pf0-1).